We begin with the raw amino-acid sequence, 184 residues long: SsrA-binding protein (184 aa).

A compositionally biased stretch (polar residues) spans 1–11 (MAAKKSTPTDS). Residues 1-31 (MAAKKSTPTDSGKSKGKKNKAQKGAGQKGAG) are disordered.

The protein belongs to the SmpB family.

It localises to the cytoplasm. Functionally, required for rescue of stalled ribosomes mediated by trans-translation. Binds to transfer-messenger RNA (tmRNA), required for stable association of tmRNA with ribosomes. tmRNA and SmpB together mimic tRNA shape, replacing the anticodon stem-loop with SmpB. tmRNA is encoded by the ssrA gene; the 2 termini fold to resemble tRNA(Ala) and it encodes a 'tag peptide', a short internal open reading frame. During trans-translation Ala-aminoacylated tmRNA acts like a tRNA, entering the A-site of stalled ribosomes, displacing the stalled mRNA. The ribosome then switches to translate the ORF on the tmRNA; the nascent peptide is terminated with the 'tag peptide' encoded by the tmRNA and targeted for degradation. The ribosome is freed to recommence translation, which seems to be the essential function of trans-translation. The protein is SsrA-binding protein of Corynebacterium jeikeium (strain K411).